The following is a 616-amino-acid chain: Coagulation factor XII (616 aa).

The signal sequence occupies residues 1 to 19; it reads MRALLLLGILLVSLESALL. Positions 42-90 constitute a Fibronectin type-II domain; the sequence is VTGEPCHFPFQYYRQLYYKCIQRGQRGPRPWCATTPNFEKDQRWAYCLE. Disulfide bonds link Cys47–Cys73, Cys61–Cys88, Cys98–Cys110, Cys104–Cys119, Cys121–Cys130, Cys135–Cys163, Cys161–Cys170, Cys178–Cys189, Cys183–Cys198, Cys200–Cys209, Cys217–Cys295, Cys238–Cys277, and Cys266–Cys290. In terms of domain architecture, EGF-like 1 spans 94–131; it reads VKDHCNKGNPCQKGGTCVNMPNGPHCICPDHFTGKHCQ. O-linked (Fuc) threonine glycosylation occurs at Thr109. Positions 133 to 173 constitute a Fibronectin type-I domain; the sequence is EKCFEPQFLQFFQENEIWHRFEPAGVSKCQCKGPKAQCKPV. The EGF-like 2 domain maps to 174–210; it reads ASQVCSTNPCLNGGSCLQTEGHRLCRCPTGYAGRLCD. The Kringle domain maps to 216–295; it reads RCYSDRGLSY…SWQYCRLARC (80 aa). Asn249, Asn271, and Asn335 each carry an N-linked (GlcNAc...) asparagine glycan. A disordered region spans residues 303 to 342; sequence PPILTPTQSPSEHQDSPLLSREPQPTTQTPSQNLTSAWCA. The span at 325 to 338 shows a compositional bias: polar residues; it reads PQPTTQTPSQNLTS. Disulfide bonds link Cys358/Cys485, Cys396/Cys412, Cys404/Cys474, Cys435/Cys438, Cys501/Cys570, Cys533/Cys549, and Cys560/Cys591. Residues 372 to 615 form the Peptidase S1 domain; that stretch reads IVGGLVALPG…YLAWIQEHTT (244 aa). The active-site Charge relay system is the His411. Asn432 carries N-linked (GlcNAc...) asparagine glycosylation. Asp460 serves as the catalytic Charge relay system. The active-site Charge relay system is the Ser564.

This sequence belongs to the peptidase S1 family. In terms of assembly, interacts with HRG; the interaction, which is enhanced in the presence of zinc ions and inhibited by heparin-binding, inhibits factor XII autoactivation and contact-initiated coagulation. O- and N-glycosylated.

The protein localises to the secreted. The enzyme catalyses Selective cleavage of Arg-|-Ile bonds in factor VII to form factor VIIa and factor XI to form factor XIa.. With respect to regulation, activity is promoted in the presence of negatively charged surfaces. Its function is as follows. Factor XII is a serum glycoprotein that participates in the initiation of blood coagulation, fibrinolysis, and the generation of bradykinin and angiotensin. Prekallikrein is cleaved by factor XII to form kallikrein, which then cleaves factor XII first to alpha-factor XIIa and then trypsin cleaves it to beta-factor XIIa. Alpha-factor XIIa activates factor XI to factor XIa. The sequence is that of Coagulation factor XII (F12) from Sus scrofa (Pig).